The primary structure comprises 228 residues: Ribosomal RNA small subunit methyltransferase G (228 aa).

Residues Gly89, Leu94, 140 to 141 (VE), and Arg159 contribute to the S-adenosyl-L-methionine site.

The protein belongs to the methyltransferase superfamily. RNA methyltransferase RsmG family.

The protein resides in the cytoplasm. It carries out the reaction guanosine(527) in 16S rRNA + S-adenosyl-L-methionine = N(7)-methylguanosine(527) in 16S rRNA + S-adenosyl-L-homocysteine. In terms of biological role, specifically methylates the N7 position of guanine in position 527 of 16S rRNA. The chain is Ribosomal RNA small subunit methyltransferase G from Burkholderia lata (strain ATCC 17760 / DSM 23089 / LMG 22485 / NCIMB 9086 / R18194 / 383).